A 260-amino-acid chain; its full sequence is Hydroxyethylthiazole kinase (260 aa).

Substrate is bound at residue methionine 49. 2 residues coordinate ATP: arginine 124 and threonine 170. A substrate-binding site is contributed by glycine 197.

This sequence belongs to the Thz kinase family. Requires Mg(2+) as cofactor.

The catalysed reaction is 5-(2-hydroxyethyl)-4-methylthiazole + ATP = 4-methyl-5-(2-phosphooxyethyl)-thiazole + ADP + H(+). It functions in the pathway cofactor biosynthesis; thiamine diphosphate biosynthesis; 4-methyl-5-(2-phosphoethyl)-thiazole from 5-(2-hydroxyethyl)-4-methylthiazole: step 1/1. In terms of biological role, catalyzes the phosphorylation of the hydroxyl group of 4-methyl-5-beta-hydroxyethylthiazole (THZ). The protein is Hydroxyethylthiazole kinase of Yersinia enterocolitica serotype O:8 / biotype 1B (strain NCTC 13174 / 8081).